The following is a 277-amino-acid chain: 2-dehydro-3-deoxyphosphooctonate aldolase (277 aa).

It belongs to the KdsA family.

It is found in the cytoplasm. It carries out the reaction D-arabinose 5-phosphate + phosphoenolpyruvate + H2O = 3-deoxy-alpha-D-manno-2-octulosonate-8-phosphate + phosphate. It functions in the pathway carbohydrate biosynthesis; 3-deoxy-D-manno-octulosonate biosynthesis; 3-deoxy-D-manno-octulosonate from D-ribulose 5-phosphate: step 2/3. Its pathway is bacterial outer membrane biogenesis; lipopolysaccharide biosynthesis. The chain is 2-dehydro-3-deoxyphosphooctonate aldolase from Syntrophotalea carbinolica (strain DSM 2380 / NBRC 103641 / GraBd1) (Pelobacter carbinolicus).